The chain runs to 501 residues: MLO-like protein 5 (501 aa).

At Met-1 to Thr-22 the chain is on the extracellular side. A helical membrane pass occupies residues Trp-23–Ile-43. The Cytoplasmic portion of the chain corresponds to His-44–Glu-68. A helical transmembrane segment spans residues Leu-69–Leu-89. Residues Cys-90–His-151 are Extracellular-facing. Residues Ile-152 to Gly-172 traverse the membrane as a helical segment. Residues Arg-173 to Lys-273 lie on the Cytoplasmic side of the membrane. The chain crosses the membrane as a helical span at residues Val-274–Val-294. Position 295 (His-295) is a topological domain, extracellular. A helical transmembrane segment spans residues Gly-296–Thr-316. Residues Lys-317–His-359 are Cytoplasmic-facing. A helical transmembrane segment spans residues Ile-360–Tyr-380. At Glu-381–His-391 the chain is on the extracellular side. A helical transmembrane segment spans residues Phe-392 to Ile-412. Residues Thr-413–Pro-501 are Cytoplasmic-facing. A disordered region spans residues Trp-443–Pro-501. The calmodulin-binding stretch occupies residues Lys-450 to Asp-471. A compositionally biased stretch (polar residues) spans Gln-491–Pro-501.

Belongs to the MLO family.

Its subcellular location is the membrane. Its function is as follows. May be involved in modulation of pathogen defense and leaf cell death. Activity seems to be regulated by Ca(2+)-dependent calmodulin binding and seems not to require heterotrimeric G proteins. This chain is MLO-like protein 5 (MLO5), found in Arabidopsis thaliana (Mouse-ear cress).